Consider the following 302-residue polypeptide: Uricase (302 aa).

Residues Lys-22 and Thr-67 each act as charge relay system in the active site. 6 residues coordinate urate: Thr-67, Asp-68, Phe-163, Arg-180, Gln-223, and Asn-249. Residue His-251 is the Charge relay system of the active site.

The protein belongs to the uricase family. In terms of assembly, homotetramer.

It catalyses the reaction urate + O2 + H2O = 5-hydroxyisourate + H2O2. It participates in purine metabolism; urate degradation; (S)-allantoin from urate: step 1/3. Functionally, catalyzes the oxidation of uric acid to 5-hydroxyisourate, which is further processed to form (S)-allantoin. This Arthrobacter globiformis protein is Uricase (uox).